Consider the following 762-residue polypeptide: Endonuclease MutS2 (762 aa).

Positions 1 to 22 (MSDAPKRSLNPTLMMNNNNTPP) are disordered. Residues 9-20 (LNPTLMMNNNNT) show a composition bias toward low complexity. An ATP-binding site is contributed by 333–340 (GVNAGGKT). Residues 688–762 (LDLRGQRSEE…GGSGVKIVKL (75 aa)) form the Smr domain.

It belongs to the DNA mismatch repair MutS family. MutS2 subfamily. In terms of assembly, homodimer. Binds to stalled ribosomes, contacting rRNA.

Its activity is regulated as follows. ATPase activity is stimulated by DNA. In terms of biological role, endonuclease that is involved in the suppression of homologous recombination and may thus have a key role in the control of bacterial genetic diversity. Also involved in repairing oxidative DNA damage. Has ATPase activity. Binds DNA. Functionally, endonuclease that is involved in the suppression of homologous recombination and thus may have a key role in the control of bacterial genetic diversity. Acts as a ribosome collision sensor, splitting the ribosome into its 2 subunits. Detects stalled/collided 70S ribosomes which it binds and splits by an ATP-hydrolysis driven conformational change. Acts upstream of the ribosome quality control system (RQC), a ribosome-associated complex that mediates the extraction of incompletely synthesized nascent chains from stalled ribosomes and their subsequent degradation. Probably generates substrates for RQC. This chain is Endonuclease MutS2, found in Helicobacter pylori (strain ATCC 700392 / 26695) (Campylobacter pylori).